Here is a 357-residue protein sequence, read N- to C-terminus: 5-hydroxytryptamine receptor 5A (357 aa).

Over 1 to 36 the chain is Extracellular; it reads MDLPINLTSFSLSTPSTLEPNRSLDTEALRTSQSFL. Asn-6 and Asn-21 each carry an N-linked (GlcNAc...) asparagine glycan. A helical membrane pass occupies residues 37–63; the sequence is SAFRVLVLTLLGFLAAATFTWNLLVLA. Topologically, residues 64 to 76 are cytoplasmic; the sequence is TILRVRTFHRVPH. A helical membrane pass occupies residues 77 to 103; that stretch reads NLVASMAISDVLVAVLVMPLSLVHELS. At 104-114 the chain is on the extracellular side; it reads GRRWQLGRRLC. A disulfide bond links Cys-114 and Cys-192. Residues 115-137 form a helical membrane-spanning segment; it reads QLWIACDVLCCTASIWNVTAIAL. Asp-121 provides a ligand contact to serotonin. Residues 138–155 lie on the Cytoplasmic side of the membrane; that stretch reads DRYWSITRHLEYTLRARK. The helical transmembrane segment at 156 to 176 threads the bilayer; it reads RVSNVMILLTWALSAVISLAP. The Extracellular segment spans residues 177 to 198; sequence LLFGWGETYSELSEECQVSREP. Residues 199–220 traverse the membrane as a helical segment; sequence SYTVFSTVGAFYLPLCVVLFVY. The Cytoplasmic portion of the chain corresponds to 221 to 287; it reads WKIYKAAKFR…QKEQRAALMV (67 aa). Residues 288–312 form a helical membrane-spanning segment; it reads GILIGVFVLCWFPFFVTELISPLCS. The Extracellular segment spans residues 313–314; that stretch reads WD. Residues 315–339 form a helical membrane-spanning segment; the sequence is IPALWKSIFLWLGYSNSFFNPLIYT. Residues 340 to 357 lie on the Cytoplasmic side of the membrane; that stretch reads AFNRSYSSAFKVFFSKQQ.

This sequence belongs to the G-protein coupled receptor 1 family. In terms of tissue distribution, central nervous system.

It is found in the cell membrane. G-protein coupled receptor for 5-hydroxytryptamine (serotonin), a biogenic hormone that functions as a neurotransmitter, a hormone and a mitogen. Also functions as a receptor for ergot alkaloid derivatives and other psychoactive substances. Ligand binding causes a conformation change that triggers signaling via guanine nucleotide-binding proteins (G proteins) and modulates the activity of downstream effectors. Htr5a is coupled to G(i)/G(o) G alpha proteins and mediates inhibitory neurotransmission: signaling inhibits adenylate cyclase activity and activates a phosphatidylinositol-calcium second messenger system that regulates the release of Ca(2+) ions from intracellular stores. The chain is 5-hydroxytryptamine receptor 5A from Rattus norvegicus (Rat).